Consider the following 517-residue polypeptide: Type II methyltransferase M.CeqI (517 aa).

2 disordered regions span residues 1 to 21 (MVVT…RWPR) and 33 to 62 (GRPR…HGRS). Residues 51–62 (RPRRGRAPHGRS) show a composition bias toward basic residues. 3 TPR repeats span residues 283–316 (AEFY…FENN), 361–394 (ALLL…GDHS), and 476–509 (SELA…RTNM).

The enzyme catalyses a 2'-deoxyadenosine in DNA + S-adenosyl-L-methionine = an N(6)-methyl-2'-deoxyadenosine in DNA + S-adenosyl-L-homocysteine + H(+). A methylase, recognizes the double-stranded sequence 5'-GATATC-3', methylates A-? on both strands, and protects the DNA from cleavage by the CeqI endonuclease. This is Type II methyltransferase M.CeqI (ceqIM) from Rhodococcus hoagii (Corynebacterium equii).